The sequence spans 433 residues: Histidine--tRNA ligase (433 aa).

Belongs to the class-II aminoacyl-tRNA synthetase family. As to quaternary structure, homodimer.

It is found in the cytoplasm. The catalysed reaction is tRNA(His) + L-histidine + ATP = L-histidyl-tRNA(His) + AMP + diphosphate + H(+). This chain is Histidine--tRNA ligase, found in Crocosphaera subtropica (strain ATCC 51142 / BH68) (Cyanothece sp. (strain ATCC 51142)).